The sequence spans 227 residues: Cytochrome c oxidase subunit 2 (227 aa).

At 1 to 14 (MAHAAQVGLQDATS) the chain is on the mitochondrial intermembrane side. A helical membrane pass occupies residues 15 to 45 (PIMEELVIFHDHALMIIFLICFLVLYALFLT). At 46–59 (LTTKLTNTSISDAQ) the chain is on the mitochondrial matrix side. Residues 60 to 87 (EMETIWTILPAIILILIALPSLRILYLT) traverse the membrane as a helical segment. Over 88 to 227 (DEINDPSFTI…IFEMGPVFTL (140 aa)) the chain is Mitochondrial intermembrane. 6 residues coordinate Cu cation: His161, Cys196, Glu198, Cys200, His204, and Met207. Glu198 serves as a coordination point for Mg(2+).

It belongs to the cytochrome c oxidase subunit 2 family. As to quaternary structure, component of the cytochrome c oxidase (complex IV, CIV), a multisubunit enzyme composed of 14 subunits. The complex is composed of a catalytic core of 3 subunits MT-CO1, MT-CO2 and MT-CO3, encoded in the mitochondrial DNA, and 11 supernumerary subunits COX4I, COX5A, COX5B, COX6A, COX6B, COX6C, COX7A, COX7B, COX7C, COX8 and NDUFA4, which are encoded in the nuclear genome. The complex exists as a monomer or a dimer and forms supercomplexes (SCs) in the inner mitochondrial membrane with NADH-ubiquinone oxidoreductase (complex I, CI) and ubiquinol-cytochrome c oxidoreductase (cytochrome b-c1 complex, complex III, CIII), resulting in different assemblies (supercomplex SCI(1)III(2)IV(1) and megacomplex MCI(2)III(2)IV(2)). Found in a complex with TMEM177, COA6, COX18, COX20, SCO1 and SCO2. Interacts with TMEM177 in a COX20-dependent manner. Interacts with COX20. Interacts with COX16. It depends on Cu cation as a cofactor.

It localises to the mitochondrion inner membrane. It catalyses the reaction 4 Fe(II)-[cytochrome c] + O2 + 8 H(+)(in) = 4 Fe(III)-[cytochrome c] + 2 H2O + 4 H(+)(out). Functionally, component of the cytochrome c oxidase, the last enzyme in the mitochondrial electron transport chain which drives oxidative phosphorylation. The respiratory chain contains 3 multisubunit complexes succinate dehydrogenase (complex II, CII), ubiquinol-cytochrome c oxidoreductase (cytochrome b-c1 complex, complex III, CIII) and cytochrome c oxidase (complex IV, CIV), that cooperate to transfer electrons derived from NADH and succinate to molecular oxygen, creating an electrochemical gradient over the inner membrane that drives transmembrane transport and the ATP synthase. Cytochrome c oxidase is the component of the respiratory chain that catalyzes the reduction of oxygen to water. Electrons originating from reduced cytochrome c in the intermembrane space (IMS) are transferred via the dinuclear copper A center (CU(A)) of subunit 2 and heme A of subunit 1 to the active site in subunit 1, a binuclear center (BNC) formed by heme A3 and copper B (CU(B)). The BNC reduces molecular oxygen to 2 water molecules using 4 electrons from cytochrome c in the IMS and 4 protons from the mitochondrial matrix. The sequence is that of Cytochrome c oxidase subunit 2 (MT-CO2) from Pongo abelii (Sumatran orangutan).